Reading from the N-terminus, the 159-residue chain is 2-C-methyl-D-erythritol 2,4-cyclodiphosphate synthase (159 aa).

Asp-8 and His-10 together coordinate a divalent metal cation. 4-CDP-2-C-methyl-D-erythritol 2-phosphate is bound by residues 8-10 (DVH) and 34-35 (HS). A divalent metal cation is bound at residue His-42. Residues 56–58 (DIG), 61–65 (FPDTD), 100–106 (AQAPKML), 132–135 (TTTE), Phe-139, and Arg-142 each bind 4-CDP-2-C-methyl-D-erythritol 2-phosphate.

Belongs to the IspF family. As to quaternary structure, homotrimer. A divalent metal cation is required as a cofactor.

It catalyses the reaction 4-CDP-2-C-methyl-D-erythritol 2-phosphate = 2-C-methyl-D-erythritol 2,4-cyclic diphosphate + CMP. Its pathway is isoprenoid biosynthesis; isopentenyl diphosphate biosynthesis via DXP pathway; isopentenyl diphosphate from 1-deoxy-D-xylulose 5-phosphate: step 4/6. Functionally, involved in the biosynthesis of isopentenyl diphosphate (IPP) and dimethylallyl diphosphate (DMAPP), two major building blocks of isoprenoid compounds. Catalyzes the conversion of 4-diphosphocytidyl-2-C-methyl-D-erythritol 2-phosphate (CDP-ME2P) to 2-C-methyl-D-erythritol 2,4-cyclodiphosphate (ME-CPP) with a corresponding release of cytidine 5-monophosphate (CMP). The polypeptide is 2-C-methyl-D-erythritol 2,4-cyclodiphosphate synthase (Escherichia coli O127:H6 (strain E2348/69 / EPEC)).